A 112-amino-acid polypeptide reads, in one-letter code: MTELAQMKCEACQADAPKVTDDELAQLIAKIPDWGVEVRDGIMQLERVYKFKNFKLAMAFTNKLADLAEADFHHPGILTEWGKVTVTWWSHSIKGLHKNDFIMAAKTDTLLD.

Belongs to the pterin-4-alpha-carbinolamine dehydratase family.

The catalysed reaction is (4aS,6R)-4a-hydroxy-L-erythro-5,6,7,8-tetrahydrobiopterin = (6R)-L-erythro-6,7-dihydrobiopterin + H2O. The sequence is that of Putative pterin-4-alpha-carbinolamine dehydratase from Shewanella halifaxensis (strain HAW-EB4).